The sequence spans 1262 residues: Isoleucine--tRNA ligase, cytoplasmic (1262 aa).

Met-1 carries the post-translational modification N-acetylmethionine. The short motif at 48–58 (PFATGLPHYGH) is the 'HIGH' region element. The 'KMSKS' region signature appears at 600–604 (KMSKR). Residue Lys-603 coordinates ATP. Phosphoserine is present on Ser-1049. At Thr-1058 the chain carries Phosphothreonine.

The protein belongs to the class-I aminoacyl-tRNA synthetase family. As to quaternary structure, part of a multisubunit complex that groups tRNA ligases for Arg (RARS1), Asp (DARS1), Gln (QARS1), Ile (IARS1), Leu (LARS1), Lys (KARS1), Met (MARS1) the bifunctional ligase for Glu and Pro (EPRS1) and the auxiliary subunits AIMP1/p43, AIMP2/p38 and EEF1E1/p18.

It localises to the cytoplasm. Its subcellular location is the cytosol. It catalyses the reaction tRNA(Ile) + L-isoleucine + ATP = L-isoleucyl-tRNA(Ile) + AMP + diphosphate. Its function is as follows. Catalyzes the specific attachment of an amino acid to its cognate tRNA in a 2 step reaction: the amino acid (AA) is first activated by ATP to form AA-AMP and then transferred to the acceptor end of the tRNA. The protein is Isoleucine--tRNA ligase, cytoplasmic (Iars1) of Mus musculus (Mouse).